The primary structure comprises 1472 residues: ABC multidrug transporter atrI (1472 aa).

Residues 1-28 are disordered; the sequence is MRRSNVVPVHSLTSSTNTGRDSRGEKYD. The ABC transporter 1 domain occupies 134 to 384; it reads FRRETWNFRN…FERQGWFCPP (251 aa). Asn-143, Asn-277, Asn-308, and Asn-332 each carry an N-linked (GlcNAc...) asparagine glycan. A run of 7 helical transmembrane segments spans residues 506-526, 530-550, 580-600, 605-625, 639-659, 664-684, and 744-764; these read ILAL…AGFY, ATLF…INSL, IPVK…LSGL, SQFF…SAVF, MTLA…VVPV, PWFK…ILIA, and FGIL…ATEL. The span at 784–793 shows a compositional bias: basic and acidic residues; that stretch reads AHLKNGHEPG. Residues 784 to 821 form a disordered region; the sequence is AHLKNGHEPGADEEAGAGKTVVSSSAEENKQDQGITSI. A compositionally biased stretch (polar residues) spans 804–821; it reads VVSSSAEENKQDQGITSI. The 243-residue stretch at 828 to 1070 folds into the ABC transporter 2 domain; sequence FTWRDVVYDI…TLLKYFESHG (243 aa). 864-871 is a binding site for ATP; the sequence is GVSGAGKT. 6 helical membrane-spanning segments follow: residues 1168–1188, 1204–1224, 1244–1264, 1282–1302, 1309–1329, and 1337–1357; these read YIAA…FSFF, VFML…LFIT, FMIA…ILVF, LVLL…DFVI, ETAG…NGVM, and GFWI…GMAA. The N-linked (GlcNAc...) asparagine glycan is linked to Asn-1402. A helical membrane pass occupies residues 1433–1453; that stretch reads FGIFWAYVVFDIAVAVMLYYC. N-linked (GlcNAc...) asparagine glycosylation is present at Asn-1460.

Belongs to the ABC transporter superfamily. ABCG family. PDR (TC 3.A.1.205) subfamily.

It localises to the cell membrane. It catalyses the reaction itraconazole(in) + ATP + H2O = itraconazole(out) + ADP + phosphate + H(+). The catalysed reaction is voriconazole(in) + ATP + H2O = voriconazole(out) + ADP + phosphate + H(+). The enzyme catalyses fluconazole(in) + ATP + H2O = fluconazole(out) + ADP + phosphate + H(+). Pleiotropic ABC efflux transporter involved in the basal level of azole susceptibility. Confers resistance to fluconazole, itraconazole and voriconazole. The chain is ABC multidrug transporter atrI from Aspergillus fumigatus (strain ATCC MYA-4609 / CBS 101355 / FGSC A1100 / Af293) (Neosartorya fumigata).